Reading from the N-terminus, the 371-residue chain is tRNA-specific 2-thiouridylase MnmA (371 aa).

ATP contacts are provided by residues 13–20 (GMSGGVDS) and Met39. Residues 99–101 (NPD) form an interaction with target base in tRNA region. Cys104 acts as the Nucleophile in catalysis. Residues Cys104 and Cys200 are joined by a disulfide bond. ATP is bound at residue Gly128. An interaction with tRNA region spans residues 150–152 (KDQ). Cys200 (cysteine persulfide intermediate) is an active-site residue. An interaction with tRNA region spans residues 308–309 (RY).

The protein belongs to the MnmA/TRMU family.

It localises to the cytoplasm. It carries out the reaction S-sulfanyl-L-cysteinyl-[protein] + uridine(34) in tRNA + AH2 + ATP = 2-thiouridine(34) in tRNA + L-cysteinyl-[protein] + A + AMP + diphosphate + H(+). Functionally, catalyzes the 2-thiolation of uridine at the wobble position (U34) of tRNA, leading to the formation of s(2)U34. This chain is tRNA-specific 2-thiouridylase MnmA, found in Listeria monocytogenes serotype 4b (strain CLIP80459).